A 135-amino-acid chain; its full sequence is Mediator of RNA polymerase II transcription subunit 10 (135 aa).

Belongs to the Mediator complex subunit 10 family. As to quaternary structure, component of the Mediator complex, which is composed of MED1, MED4, MED6, MED7, MED8, MED9, MED10, MED11, MED12, MED13, MED13L, MED14, MED15, MED16, MED17, MED18, MED19, MED20, MED21, MED22, MED23, MED24, MED25, MED26, MED27, MED29, MED30, MED31, CCNC, CDK8 and CDC2L6/CDK11. The MED12, MED13, CCNC and CDK8 subunits form a distinct module termed the CDK8 module. Mediator containing the CDK8 module is less active than Mediator lacking this module in supporting transcriptional activation. Individual preparations of the Mediator complex lacking one or more distinct subunits have been variously termed ARC, CRSP, DRIP, PC2, SMCC and TRAP.

The protein localises to the nucleus. Its function is as follows. Component of the Mediator complex, a coactivator involved in the regulated transcription of nearly all RNA polymerase II-dependent genes. Mediator functions as a bridge to convey information from gene-specific regulatory proteins to the basal RNA polymerase II transcription machinery. Mediator is recruited to promoters by direct interactions with regulatory proteins and serves as a scaffold for the assembly of a functional preinitiation complex with RNA polymerase II and the general transcription factors. The protein is Mediator of RNA polymerase II transcription subunit 10 (Med10) of Mus musculus (Mouse).